Reading from the N-terminus, the 363-residue chain is 3-isopropylmalate dehydrogenase (363 aa).

NAD(+) is bound at residue 78–91; the sequence is GPKWEHLPPDQQPE. Substrate-binding residues include Arg99, Arg109, Arg138, and Asp227. Residues Asp227, Asp251, and Asp255 each contribute to the Mg(2+) site. Position 285–297 (285–297) interacts with NAD(+); the sequence is GSAPDIAGKNIAN.

Belongs to the isocitrate and isopropylmalate dehydrogenases family. LeuB type 1 subfamily. Homodimer. It depends on Mg(2+) as a cofactor. Mn(2+) is required as a cofactor.

Its subcellular location is the cytoplasm. The enzyme catalyses (2R,3S)-3-isopropylmalate + NAD(+) = 4-methyl-2-oxopentanoate + CO2 + NADH. The protein operates within amino-acid biosynthesis; L-leucine biosynthesis; L-leucine from 3-methyl-2-oxobutanoate: step 3/4. Functionally, catalyzes the oxidation of 3-carboxy-2-hydroxy-4-methylpentanoate (3-isopropylmalate) to 3-carboxy-4-methyl-2-oxopentanoate. The product decarboxylates to 4-methyl-2 oxopentanoate. The chain is 3-isopropylmalate dehydrogenase from Escherichia coli O157:H7.